A 618-amino-acid polypeptide reads, in one-letter code: Chaperone protein DnaK (618 aa).

A Phosphothreonine; by autocatalysis modification is found at Thr175. Residues 579-618 form a disordered region; sequence GAPGAEGFDSNMAGEANAGQNANNDDNVVDADYKVEDDEK. Residues 591–604 are compositionally biased toward low complexity; it reads AGEANAGQNANNDD.

This sequence belongs to the heat shock protein 70 family.

Functionally, acts as a chaperone. This Clostridium tetani (strain Massachusetts / E88) protein is Chaperone protein DnaK.